A 269-amino-acid polypeptide reads, in one-letter code: Meiotic drive suppressor wtf5 (269 aa).

The segment at Met-1–Gly-65 is disordered. Basic and acidic residues predominate over residues Lys-19–Pro-30. Transmembrane regions (helical) follow at residues Leu-73–Leu-95, Trp-110–Glu-132, and Trp-206–Ala-228.

The protein belongs to the WTF family. Homomer. Interacts with other proteins that exhibit high sequence similarity.

It localises to the spore membrane. Its subcellular location is the vacuole membrane. Functionally, acts as a suppressor component of the dual wtf meiotic drive system, and can suppress but not confer meiotic drive by compatible poisons. Wtf meiotic drive systems promote unequal transmission of alleles from the parental zygote to progeny spores by encoding a poison and an antidote from the same locus; the poison is trans-acting and forms toxic aggregates in all spores within an ascus, wherease the antidote is spore-specific and targets aggregates for degradation by the vacuole. Meiotic drive by wtf systems therefore lead to poisoning of all progeny that do not inherit the dual poison/antidote allele, or express a compatible antidote. This Schizosaccharomyces pombe (strain 972 / ATCC 24843) (Fission yeast) protein is Meiotic drive suppressor wtf5.